The primary structure comprises 728 residues: METTTTERRRLFATEKVGGRAVYRLQAATVAAGILLVLYYRATRVPAAGEGRAAWLGMAAAELWFAVYWVITQSVRWCPVRRRTFKNRLAERYKENLPGVDVFVCTADPHAEPPSLVISTILSVMAYNYPSEKISVYLSDDGGSILTFYALWEASMFAKKWLPFCRRYNIEPRSPAAYFSESEGHHNLCSPKEWSFIKNLYEEMRERIDSAVMSGKIPEEIKLKHKGFDEWNSEMTSKNHQPIVQVLIDGKSQNAVDDDGNVLPTLVYMAREKSPQYHHNFKAGALNALIRVSALISDSPVILNVDCDMYSNNSDSIRDALCFFLDEEMSHKIGFVQYPQNYNNMTKNNIYGNSLNVINHVEMRGLDSAGGCLYIGTGCFHRREILCGKKFSKDYKEDWGRGIKERGHENIDEIEEKAKSLATCTYELRTQWGNEIGVKYGCPVEDVITGLAIHCRGWESVYMEPQRAAFVGVAPATLAQTILQHKRWSEGNFTIFLSKHNTFLFGHGKISLQLQMGYCIYGLWAANSLPTIYYVMIPALGLVKGTPLFPEIMSPWATPFIYVFCVKTLYSLYEALLSGDTLKGWWNGQRMWMVKRITSYLYGFIDTIRKLLGLSKMSFEITAKVSDGDEAKRYEQEILEFGSSSPEFVIIATVALLNFVCLVAGLSKIMAGVWNVFLPQVILCGLIVITNIPIYEAMFVRKDKGRIPLPVTLASIGFVMLAFLLPIV.

2 helical membrane passes run 21–43 (AVYRLQAATVAAGILLVLYYRAT) and 53–73 (AAWLGMAAAELWFAVYWVITQ). Active-site residues include aspartate 141 and aspartate 446. Helical transmembrane passes span 523-543 (LWAANSLPTIYYVMIPALGLV), 546-566 (TPLFPEIMSPWATPFIYVFCV), 646-666 (PEFVIIATVALLNFVCLVAGL), 669-689 (IMAGVWNVFLPQVILCGLIVI), and 707-727 (IPLPVTLASIGFVMLAFLLPI).

It belongs to the glycosyltransferase 2 family. Plant cellulose synthase-like E subfamily.

It localises to the golgi apparatus membrane. In terms of biological role, thought to be a Golgi-localized beta-glycan synthase that polymerize the backbones of noncellulosic polysaccharides (hemicelluloses) of plant cell wall. This Oryza sativa subsp. japonica (Rice) protein is Cellulose synthase-like protein E6 (CSLE6).